Reading from the N-terminus, the 278-residue chain is 4-hydroxy-3-methylbut-2-enyl diphosphate reductase (278 aa).

C12 contacts [4Fe-4S] cluster. H40 and H75 together coordinate (2E)-4-hydroxy-3-methylbut-2-enyl diphosphate. Dimethylallyl diphosphate is bound by residues H40 and H75. Residues H40 and H75 each coordinate isopentenyl diphosphate. C97 contributes to the [4Fe-4S] cluster binding site. H125 contributes to the (2E)-4-hydroxy-3-methylbut-2-enyl diphosphate binding site. H125 contacts dimethylallyl diphosphate. H125 is a binding site for isopentenyl diphosphate. The active-site Proton donor is the E127. T157 provides a ligand contact to (2E)-4-hydroxy-3-methylbut-2-enyl diphosphate. C187 lines the [4Fe-4S] cluster pocket. (2E)-4-hydroxy-3-methylbut-2-enyl diphosphate is bound by residues S215, S216, N217, and S258. Dimethylallyl diphosphate contacts are provided by S215, S216, N217, and S258. Positions 215, 216, 217, and 258 each coordinate isopentenyl diphosphate.

It belongs to the IspH family. [4Fe-4S] cluster serves as cofactor.

The catalysed reaction is isopentenyl diphosphate + 2 oxidized [2Fe-2S]-[ferredoxin] + H2O = (2E)-4-hydroxy-3-methylbut-2-enyl diphosphate + 2 reduced [2Fe-2S]-[ferredoxin] + 2 H(+). It catalyses the reaction dimethylallyl diphosphate + 2 oxidized [2Fe-2S]-[ferredoxin] + H2O = (2E)-4-hydroxy-3-methylbut-2-enyl diphosphate + 2 reduced [2Fe-2S]-[ferredoxin] + 2 H(+). The protein operates within isoprenoid biosynthesis; dimethylallyl diphosphate biosynthesis; dimethylallyl diphosphate from (2E)-4-hydroxy-3-methylbutenyl diphosphate: step 1/1. It participates in isoprenoid biosynthesis; isopentenyl diphosphate biosynthesis via DXP pathway; isopentenyl diphosphate from 1-deoxy-D-xylulose 5-phosphate: step 6/6. Functionally, catalyzes the conversion of 1-hydroxy-2-methyl-2-(E)-butenyl 4-diphosphate (HMBPP) into a mixture of isopentenyl diphosphate (IPP) and dimethylallyl diphosphate (DMAPP). Acts in the terminal step of the DOXP/MEP pathway for isoprenoid precursor biosynthesis. This is 4-hydroxy-3-methylbut-2-enyl diphosphate reductase from Pseudothermotoga lettingae (strain ATCC BAA-301 / DSM 14385 / NBRC 107922 / TMO) (Thermotoga lettingae).